We begin with the raw amino-acid sequence, 478 residues long: NADH-ubiquinone oxidoreductase 49 kDa subunit, mitochondrial (478 aa).

The N-terminal 42 residues, 1–42 (MATTLFRLAGRNAKRHCMRQSTTIAHNLNSTRAFSASALRRY), are a transit peptide targeting the mitochondrion. Positions 341, 347, and 362 each coordinate [4Fe-4S] cluster.

It belongs to the complex I 49 kDa subunit family. As to quaternary structure, complex I is composed of about 40 different subunits. [4Fe-4S] cluster serves as cofactor.

It localises to the mitochondrion inner membrane. The catalysed reaction is a ubiquinone + NADH + 5 H(+)(in) = a ubiquinol + NAD(+) + 4 H(+)(out). Its function is as follows. Core subunit of the mitochondrial membrane respiratory chain NADH dehydrogenase (Complex I) that is believed to belong to the minimal assembly required for catalysis. Complex I functions in the transfer of electrons from NADH to the respiratory chain. The immediate electron acceptor for the enzyme is believed to be ubiquinone. This is NADH-ubiquinone oxidoreductase 49 kDa subunit, mitochondrial (nuo-49) from Neurospora crassa (strain ATCC 24698 / 74-OR23-1A / CBS 708.71 / DSM 1257 / FGSC 987).